Here is a 440-residue protein sequence, read N- to C-terminus: Chromosome partition protein MukF (440 aa).

The segment at 208 to 236 (LSETSGTLRELQDTLEAAGDKLQANLLRI) is leucine-zipper.

Belongs to the MukF family. Interacts, and probably forms a ternary complex, with MukE and MukB via its C-terminal region. The complex formation is stimulated by calcium or magnesium. It is required for an interaction between MukE and MukB.

The protein localises to the cytoplasm. Its subcellular location is the nucleoid. Involved in chromosome condensation, segregation and cell cycle progression. May participate in facilitating chromosome segregation by condensation DNA from both sides of a centrally located replisome during cell division. Not required for mini-F plasmid partitioning. Probably acts via its interaction with MukB and MukE. Overexpression results in anucleate cells. It has a calcium binding activity. This chain is Chromosome partition protein MukF, found in Escherichia coli O157:H7.